A 157-amino-acid polypeptide reads, in one-letter code: SsrA-binding protein (157 aa).

The protein belongs to the SmpB family.

The protein localises to the cytoplasm. In terms of biological role, required for rescue of stalled ribosomes mediated by trans-translation. Binds to transfer-messenger RNA (tmRNA), required for stable association of tmRNA with ribosomes. tmRNA and SmpB together mimic tRNA shape, replacing the anticodon stem-loop with SmpB. tmRNA is encoded by the ssrA gene; the 2 termini fold to resemble tRNA(Ala) and it encodes a 'tag peptide', a short internal open reading frame. During trans-translation Ala-aminoacylated tmRNA acts like a tRNA, entering the A-site of stalled ribosomes, displacing the stalled mRNA. The ribosome then switches to translate the ORF on the tmRNA; the nascent peptide is terminated with the 'tag peptide' encoded by the tmRNA and targeted for degradation. The ribosome is freed to recommence translation, which seems to be the essential function of trans-translation. The polypeptide is SsrA-binding protein (Limosilactobacillus reuteri (strain DSM 20016) (Lactobacillus reuteri)).